The chain runs to 458 residues: tRNA modification GTPase MnmE (458 aa).

(6S)-5-formyl-5,6,7,8-tetrahydrofolate is bound by residues arginine 22, glutamate 84, and arginine 123. In terms of domain architecture, TrmE-type G spans 220–379 (GIATAIIGRP…LETAIADLFF (160 aa)). Asparagine 230 serves as a coordination point for K(+). Residues 230 to 235 (NVGKSS), 249 to 255 (TDIAGTT), and 274 to 277 (DTAG) each bind GTP. Serine 234 contacts Mg(2+). Threonine 249, isoleucine 251, and threonine 254 together coordinate K(+). Threonine 255 lines the Mg(2+) pocket. Lysine 458 provides a ligand contact to (6S)-5-formyl-5,6,7,8-tetrahydrofolate.

This sequence belongs to the TRAFAC class TrmE-Era-EngA-EngB-Septin-like GTPase superfamily. TrmE GTPase family. Homodimer. Heterotetramer of two MnmE and two MnmG subunits. The cofactor is K(+).

Its subcellular location is the cytoplasm. Its function is as follows. Exhibits a very high intrinsic GTPase hydrolysis rate. Involved in the addition of a carboxymethylaminomethyl (cmnm) group at the wobble position (U34) of certain tRNAs, forming tRNA-cmnm(5)s(2)U34. The polypeptide is tRNA modification GTPase MnmE (Bacillus cereus (strain ATCC 10987 / NRS 248)).